The sequence spans 237 residues: MSKKITILIDAGHGGYDPGAIGIRGLKEKNINIEIALKLEKLLNHDKMFCTILTRHNDSYLSLKKRKQLLKKNQVNFLISIHADSSRKQNVSGASIWIVSKTRINREINNYLKNKSTLLFSKKIENIFKQNKNDFFLKKTILDLQSNNFQKIELDLSKEILKQLEKNTKLNKKYPNYASLGILSSINTPSILIETGFITNILEGKKLKTTNYQNKIANSIYLGLKNYFTKSSYILKK.

Residues 7–225 (ILIDAGHGGY…IANSIYLGLK (219 aa)) enclose the MurNAc-LAA domain.

This sequence belongs to the N-acetylmuramoyl-L-alanine amidase 3 family.

It is found in the secreted. It catalyses the reaction Hydrolyzes the link between N-acetylmuramoyl residues and L-amino acid residues in certain cell-wall glycopeptides.. Cell-wall hydrolase involved in septum cleavage during cell division. The polypeptide is Putative N-acetylmuramoyl-L-alanine amidase (amiB) (Buchnera aphidicola subsp. Acyrthosiphon pisum (strain APS) (Acyrthosiphon pisum symbiotic bacterium)).